Consider the following 370-residue polypeptide: Actin-related protein 2/3 complex subunit 1A (370 aa).

WD repeat units lie at residues 6–45 (FLLEPITCHAWNRDRTQIALSPNNHEVHIYKKNGGQWVKA), 50–89 (EHNGHITGIDWAPKSDRIVTCGADRNAYVWSQKDGVWKPT), 140–179 (PIRSTVLSLDWHPNNVLLAAGSCDFKCRVFSAYIKEVDEK), 202–241 (GTGGWVHGVSFSASGSRLAWVSHDSTVSVADASKSVQVST), 244–284 (TEFL…TFVS), and 322–365 (LHQN…SSIQ).

Belongs to the WD repeat ARPC1 family. As to quaternary structure, probable component of the Arp2/3 complex in which it may replace ARPC1B.

It is found in the cytoplasm. The protein resides in the cytoskeleton. The protein localises to the nucleus. Probably functions as a component of the Arp2/3 complex which is involved in regulation of actin polymerization and together with an activating nucleation-promoting factor (NPF) mediates the formation of branched actin networks. In addition to its role in the cytoplasmic cytoskeleton, the Arp2/3 complex also promotes actin polymerization in the nucleus, thereby regulating gene transcription and repair of damaged DNA. This is Actin-related protein 2/3 complex subunit 1A (ARPC1A) from Bos taurus (Bovine).